We begin with the raw amino-acid sequence, 215 residues long: Phosphatidylserine decarboxylase proenzyme (215 aa).

Ser-184 (schiff-base intermediate with substrate; via pyruvic acid) is an active-site residue. Residue Ser-184 is modified to Pyruvic acid (Ser); by autocatalysis.

Belongs to the phosphatidylserine decarboxylase family. PSD-A subfamily. Heterodimer of a large membrane-associated beta subunit and a small pyruvoyl-containing alpha subunit. Pyruvate is required as a cofactor. In terms of processing, is synthesized initially as an inactive proenzyme. Formation of the active enzyme involves a self-maturation process in which the active site pyruvoyl group is generated from an internal serine residue via an autocatalytic post-translational modification. Two non-identical subunits are generated from the proenzyme in this reaction, and the pyruvate is formed at the N-terminus of the alpha chain, which is derived from the carboxyl end of the proenzyme. The post-translation cleavage follows an unusual pathway, termed non-hydrolytic serinolysis, in which the side chain hydroxyl group of the serine supplies its oxygen atom to form the C-terminus of the beta chain, while the remainder of the serine residue undergoes an oxidative deamination to produce ammonia and the pyruvoyl prosthetic group on the alpha chain.

Its subcellular location is the cell membrane. The catalysed reaction is a 1,2-diacyl-sn-glycero-3-phospho-L-serine + H(+) = a 1,2-diacyl-sn-glycero-3-phosphoethanolamine + CO2. It functions in the pathway phospholipid metabolism; phosphatidylethanolamine biosynthesis; phosphatidylethanolamine from CDP-diacylglycerol: step 2/2. Functionally, catalyzes the formation of phosphatidylethanolamine (PtdEtn) from phosphatidylserine (PtdSer). This is Phosphatidylserine decarboxylase proenzyme from Ralstonia nicotianae (strain ATCC BAA-1114 / GMI1000) (Ralstonia solanacearum).